The sequence spans 181 residues: Ribosome-recycling factor (181 aa).

A disordered region spans residues 131–154 (RRDAMDSVKKEKEMPEDDVRKAEN).

It belongs to the RRF family.

Its subcellular location is the cytoplasm. Functionally, responsible for the release of ribosomes from messenger RNA at the termination of protein biosynthesis. May increase the efficiency of translation by recycling ribosomes from one round of translation to another. The polypeptide is Ribosome-recycling factor (Leuconostoc citreum (strain KM20)).